Consider the following 252-residue polypeptide: Imidazole glycerol phosphate synthase subunit HisF (252 aa).

Residues Asp11 and Asp130 contribute to the active site.

Belongs to the HisA/HisF family. As to quaternary structure, heterodimer of HisH and HisF.

The protein resides in the cytoplasm. It catalyses the reaction 5-[(5-phospho-1-deoxy-D-ribulos-1-ylimino)methylamino]-1-(5-phospho-beta-D-ribosyl)imidazole-4-carboxamide + L-glutamine = D-erythro-1-(imidazol-4-yl)glycerol 3-phosphate + 5-amino-1-(5-phospho-beta-D-ribosyl)imidazole-4-carboxamide + L-glutamate + H(+). Its pathway is amino-acid biosynthesis; L-histidine biosynthesis; L-histidine from 5-phospho-alpha-D-ribose 1-diphosphate: step 5/9. In terms of biological role, IGPS catalyzes the conversion of PRFAR and glutamine to IGP, AICAR and glutamate. The HisF subunit catalyzes the cyclization activity that produces IGP and AICAR from PRFAR using the ammonia provided by the HisH subunit. In Streptococcus sanguinis (strain SK36), this protein is Imidazole glycerol phosphate synthase subunit HisF.